We begin with the raw amino-acid sequence, 610 residues long: All-trans-retinol 13,14-reductase (610 aa).

The N-terminal stretch at 1 to 18 is a signal peptide; sequence MWLPLVLFLAVLLLAVVC.

This sequence belongs to the carotenoid/retinoid oxidoreductase family. CrtISO subfamily. Requires NAD(+) as cofactor. NADP(+) is required as a cofactor. FAD serves as cofactor.

It is found in the endoplasmic reticulum membrane. The enzyme catalyses all-trans-13,14-dihydroretinol + A = all-trans-retinol + AH2. In terms of biological role, catalyzes the saturation of all-trans-retinol to all-trans-13,14-dihydroretinol. Does not exhibit any activity toward all-trans-retinoic acid, nor 9-cis, 11-cis or 13-cis-retinol isomers. May play a role in the metabolism of vitamin A. Independently of retinol conversion, may regulate liver metabolism upstream of MLXIPL/ChREBP. May play a role in adipocyte differentiation. This is All-trans-retinol 13,14-reductase (RETSAT) from Macaca fascicularis (Crab-eating macaque).